We begin with the raw amino-acid sequence, 247 residues long: 2,3-bisphosphoglycerate-dependent phosphoglycerate mutase (247 aa).

Residues 8 to 15 (RHGESTWN), 21 to 22 (TG), Arg60, 87 to 90 (ERHY), Lys98, 114 to 115 (RR), and 183 to 184 (GN) each bind substrate. The Tele-phosphohistidine intermediate role is filled by His9. Residue Glu87 is the Proton donor/acceptor of the active site.

It belongs to the phosphoglycerate mutase family. BPG-dependent PGAM subfamily. Homodimer.

The enzyme catalyses (2R)-2-phosphoglycerate = (2R)-3-phosphoglycerate. It participates in carbohydrate degradation; glycolysis; pyruvate from D-glyceraldehyde 3-phosphate: step 3/5. Catalyzes the interconversion of 2-phosphoglycerate and 3-phosphoglycerate. The polypeptide is 2,3-bisphosphoglycerate-dependent phosphoglycerate mutase (Acidovorax ebreus (strain TPSY) (Diaphorobacter sp. (strain TPSY))).